Consider the following 321-residue polypeptide: 5,10-methylenetetrahydromethanopterin reductase (321 aa).

The protein belongs to the mer family. As to quaternary structure, homotetramer.

The protein localises to the cytoplasm. It catalyses the reaction 5-methyl-5,6,7,8-tetrahydromethanopterin + oxidized coenzyme F420-(gamma-L-Glu)(n) + H(+) = 5,10-methylenetetrahydromethanopterin + reduced coenzyme F420-(gamma-L-Glu)(n). It participates in one-carbon metabolism; methanogenesis from CO(2); methyl-coenzyme M from 5,10-methylene-5,6,7,8-tetrahydromethanopterin: step 1/2. Functionally, catalyzes the reversible reduction of methylene-H(4)MPT to methyl-H(4)MPT. This chain is 5,10-methylenetetrahydromethanopterin reductase, found in Methanothermobacter marburgensis (strain ATCC BAA-927 / DSM 2133 / JCM 14651 / NBRC 100331 / OCM 82 / Marburg) (Methanobacterium thermoautotrophicum).